Consider the following 172-residue polypeptide: NADH-ubiquinone oxidoreductase chain 6 (172 aa).

5 consecutive transmembrane segments (helical) span residues 1–21 (MTYFMFLLLMALVVGLVAVAS), 25–45 (PYFAALGLVVAAGVGCGVLVG), 53–73 (LVLFLIYLGGMLVVFAYAALA), 86–106 (VLGYVLVYLLGVGLVAGIFWG), and 140–160 (GGMLVICAWVLLLTLLVVLEL).

This sequence belongs to the complex I subunit 6 family.

The protein resides in the mitochondrion membrane. It carries out the reaction a ubiquinone + NADH + 5 H(+)(in) = a ubiquinol + NAD(+) + 4 H(+)(out). Its function is as follows. Core subunit of the mitochondrial membrane respiratory chain NADH dehydrogenase (Complex I) that is believed to belong to the minimal assembly required for catalysis. Complex I functions in the transfer of electrons from NADH to the respiratory chain. The immediate electron acceptor for the enzyme is believed to be ubiquinone. The chain is NADH-ubiquinone oxidoreductase chain 6 (MT-ND6) from Cyprinus carpio (Common carp).